The primary structure comprises 572 residues: Hemagglutinin-neuraminidase (572 aa).

Residues Met-1–Lys-31 are Intravirion-facing. Residues Ile-32–Leu-52 form a helical membrane-spanning segment. The Virion surface portion of the chain corresponds to Ile-53–Ser-572. Intrachain disulfides connect Cys-190/Cys-214 and Cys-256/Cys-269. Positions Asn-252–Ser-257 are involved in neuraminidase activity. Residues Asn-308 and Asn-351 are each glycosylated (N-linked (GlcNAc...) asparagine; by host). 2 cysteine pairs are disulfide-bonded: Cys-355-Cys-469 and Cys-463-Cys-473. Asn-523 carries N-linked (GlcNAc...) asparagine; by host glycosylation. Residues Cys-535 and Cys-544 are joined by a disulfide bond.

Belongs to the paramyxoviruses hemagglutinin-neuraminidase family. Homotetramer; composed of disulfide-linked homodimers. Interacts with F protein trimer.

It localises to the virion membrane. The protein localises to the host cell membrane. It catalyses the reaction Hydrolysis of alpha-(2-&gt;3)-, alpha-(2-&gt;6)-, alpha-(2-&gt;8)- glycosidic linkages of terminal sialic acid residues in oligosaccharides, glycoproteins, glycolipids, colominic acid and synthetic substrates.. Its function is as follows. Attaches the virus to sialic acid-containing cell receptors and thereby initiating infection. Binding of HN protein to the receptor induces a conformational change that allows the F protein to trigger virion/cell membranes fusion. Functionally, neuraminidase activity ensures the efficient spread of the virus by dissociating the mature virions from the neuraminic acid containing glycoproteins. This chain is Hemagglutinin-neuraminidase (HN), found in Homo sapiens (Human).